The following is a 144-amino-acid chain: Large ribosomal subunit protein uL16 (144 aa).

The protein belongs to the universal ribosomal protein uL16 family. Part of the 50S ribosomal subunit.

Its function is as follows. Binds 23S rRNA and is also seen to make contacts with the A and possibly P site tRNAs. In Oceanobacillus iheyensis (strain DSM 14371 / CIP 107618 / JCM 11309 / KCTC 3954 / HTE831), this protein is Large ribosomal subunit protein uL16.